The primary structure comprises 835 residues: Protein translocase subunit SecA (835 aa).

Residues Q85, 103–107 (GEGKT), and D495 each bind ATP. The interval 806–835 (KVFLNNDSSDDESSKKRRTRKVRTSKKPWN) is disordered. The span at 820–835 (KKRRTRKVRTSKKPWN) shows a compositional bias: basic residues.

This sequence belongs to the SecA family. In terms of assembly, monomer and homodimer. Part of the essential Sec protein translocation apparatus which comprises SecA, SecYEG and auxiliary proteins SecDF. Other proteins may also be involved.

It is found in the cell membrane. The protein resides in the cytoplasm. The catalysed reaction is ATP + H2O + cellular proteinSide 1 = ADP + phosphate + cellular proteinSide 2.. In terms of biological role, part of the Sec protein translocase complex. Interacts with the SecYEG preprotein conducting channel. Has a central role in coupling the hydrolysis of ATP to the transfer of proteins into and across the cell membrane, serving as an ATP-driven molecular motor driving the stepwise translocation of polypeptide chains across the membrane. The sequence is that of Protein translocase subunit SecA from Onion yellows phytoplasma (strain OY-M).